A 513-amino-acid chain; its full sequence is Na(+)/H(+) antiporter NhaB (513 aa).

12 consecutive transmembrane segments (helical) span residues leucine 23–alanine 43, isoleucine 52–isoleucine 72, leucine 97–phenylalanine 117, leucine 120–phenylalanine 140, phenylalanine 144–isoleucine 164, leucine 202–proline 222, phenylalanine 238–leucine 258, alanine 303–isoleucine 323, threonine 348–isoleucine 368, leucine 391–isoleucine 411, alanine 447–isoleucine 467, and valine 475–phenylalanine 495.

This sequence belongs to the NhaB Na(+)/H(+) (TC 2.A.34) antiporter family.

It is found in the cell inner membrane. It catalyses the reaction 2 Na(+)(in) + 3 H(+)(out) = 2 Na(+)(out) + 3 H(+)(in). Functionally, na(+)/H(+) antiporter that extrudes sodium in exchange for external protons. The sequence is that of Na(+)/H(+) antiporter NhaB from Escherichia coli (strain 55989 / EAEC).